The following is a 177-amino-acid chain: Large ribosomal subunit protein uL6 (177 aa).

Lys-44 carries the N6-acetyllysine modification.

The protein belongs to the universal ribosomal protein uL6 family. As to quaternary structure, part of the 50S ribosomal subunit.

In terms of biological role, this protein binds to the 23S rRNA, and is important in its secondary structure. It is located near the subunit interface in the base of the L7/L12 stalk, and near the tRNA binding site of the peptidyltransferase center. This Escherichia coli O139:H28 (strain E24377A / ETEC) protein is Large ribosomal subunit protein uL6.